We begin with the raw amino-acid sequence, 584 residues long: Probable terpene synthase 9 (584 aa).

Asp339, Asp343, and Glu491 together coordinate Mg(2+). A DDXXD motif motif is present at residues 339-343 (DDMYD).

The protein belongs to the terpene synthase family. It depends on Mg(2+) as a cofactor.

Functionally, probable sesquiterpene synthase. The sequence is that of Probable terpene synthase 9 (TPS9) from Ricinus communis (Castor bean).